The following is a 336-amino-acid chain: uncharacterized protein (336 aa).

To bacterial alkanal monooxygenase alpha and beta chains.

This is an uncharacterized protein from Bacillus subtilis (strain 168).